Reading from the N-terminus, the 361-residue chain is Actin maturation protease (361 aa).

The interval M1–V75 is disordered. 2 stretches are compositionally biased toward pro residues: residues N24 to P33 and P52 to P72. A peptidase C39-like region spans residues S134–G254. Residue C142 is part of the active site.

The protein belongs to the ACTMAP family. Interacts (via N-terminus) with PFN2 isoforms 1/IIa and 2/IIb; the interactions may facilitate efficient cleavage of the acetylated N-terminus of immature actin. Interacts with PFN1.

It localises to the cytoplasm. It carries out the reaction N-terminal N(alpha)-acetyl-L-methionyl-L-aspartyl-[protein] + H2O = N-terminal L-aspartyl-[protein] + N-acetyl-L-methionine. The catalysed reaction is N-terminal N(alpha)-acetyl-L-methionyl-L-glutamyl-[protein] + H2O = N-terminal L-glutamyl-[protein] + N-acetyl-L-methionine. It catalyses the reaction N-terminal N(alpha)-acetyl-L-cysteinyl-L-aspartyl-[protein] + H2O = N-terminal L-aspartyl-[protein] + N-acetyl-L-cysteine. The enzyme catalyses N-terminal N(alpha)-acetyl-L-cysteinyl-L-glutamyl-[protein] + H2O = N-terminal L-glutamyl-[protein] + N-acetyl-L-cysteine. Functionally, actin maturation protease that specifically mediates the cleavage of immature acetylated N-terminal actin, thereby contributing to actin maturation. Cleaves N-terminal acetylated methionine of immature cytoplasmic beta- and gamma-actins Actb and Actg1 after translation. Cleaves N-terminal acetylated cysteine of muscle alpha-actins Acta1, Actc1 and Acta2 after canonical removal of N-terminal methionine. The chain is Actin maturation protease from Mus musculus (Mouse).